The primary structure comprises 440 residues: Transposon Ty1-DR1 Gag polyprotein (440 aa).

3 stretches are compositionally biased toward polar residues: residues 1 to 10, 48 to 60, and 127 to 152; these read MESQQLSNYP, TKAN…TPAS, and QSQF…GNTF. Disordered stretches follow at residues 1–93, 126–173, and 352–440; these read MESQ…MMTQ, PQSQ…RPPP, and GSRN…PGTY. Low complexity predominate over residues 153 to 165; sequence TDSSSADSDMTST. Residues 299–401 form an RNA-binding region; sequence NNGIHINNKV…NSKSKTARAH (103 aa). Over residues 402-418 the composition is skewed to low complexity; sequence NVSTSNNSPSTDNDSIS. A Phosphoserine modification is found at serine 416. Residues 419–428 are compositionally biased toward polar residues; it reads KSTTEPIQLN. Over residues 429-440 the composition is skewed to basic and acidic residues; sequence NKHDLHLRPGTY.

As to quaternary structure, homotrimer.

Its subcellular location is the cytoplasm. In terms of biological role, capsid protein (CA) is the structural component of the virus-like particle (VLP), forming the shell that encapsulates the retrotransposons dimeric RNA genome. The particles are assembled from trimer-clustered units and there are holes in the capsid shells that allow for the diffusion of macromolecules. CA also has nucleocapsid-like chaperone activity, promoting primer tRNA(i)-Met annealing to the multipartite primer-binding site (PBS), dimerization of Ty1 RNA and initiation of reverse transcription. The sequence is that of Transposon Ty1-DR1 Gag polyprotein (TY1A-DR1) from Saccharomyces cerevisiae (strain ATCC 204508 / S288c) (Baker's yeast).